A 449-amino-acid polypeptide reads, in one-letter code: Tubulin alpha chain (449 aa).

GTP is bound at residue Gln-11. Residue Lys-40 is modified to N6-acetyllysine. Residues Glu-71, Ser-140, Gly-144, Thr-145, Thr-179, Asn-206, and Asn-228 each coordinate GTP. Residue Glu-71 coordinates Mg(2+). Glu-254 is an active-site residue.

The protein belongs to the tubulin family. In terms of assembly, dimer of alpha and beta chains. A typical microtubule is a hollow water-filled tube with an outer diameter of 25 nm and an inner diameter of 15 nM. Alpha-beta heterodimers associate head-to-tail to form protofilaments running lengthwise along the microtubule wall with the beta-tubulin subunit facing the microtubule plus end conferring a structural polarity. Microtubules usually have 13 protofilaments but different protofilament numbers can be found in some organisms and specialized cells. Mg(2+) is required as a cofactor. Undergoes a tyrosination/detyrosination cycle, the cyclic removal and re-addition of a C-terminal tyrosine residue by the enzymes tubulin tyrosine carboxypeptidase (TTCP) and tubulin tyrosine ligase (TTL), respectively. In terms of processing, acetylation of alpha chains at Lys-40 stabilizes microtubules and affects affinity and processivity of microtubule motors. This modification has a role in multiple cellular functions, ranging from cell motility, cell cycle progression or cell differentiation to intracellular trafficking and signaling.

It is found in the cytoplasm. The protein resides in the cytoskeleton. It catalyses the reaction GTP + H2O = GDP + phosphate + H(+). Its function is as follows. Tubulin is the major constituent of microtubules, a cylinder consisting of laterally associated linear protofilaments composed of alpha- and beta-tubulin heterodimers. Microtubules grow by the addition of GTP-tubulin dimers to the microtubule end, where a stabilizing cap forms. Below the cap, tubulin dimers are in GDP-bound state, owing to GTPase activity of alpha-tubulin. The chain is Tubulin alpha chain from Tetrahymena pyriformis.